The sequence spans 158 residues: NAD(P)H-quinone oxidoreductase subunit J, chloroplastic (158 aa).

This sequence belongs to the complex I 30 kDa subunit family. In terms of assembly, NDH is composed of at least 16 different subunits, 5 of which are encoded in the nucleus.

Its subcellular location is the plastid. It is found in the chloroplast thylakoid membrane. The catalysed reaction is a plastoquinone + NADH + (n+1) H(+)(in) = a plastoquinol + NAD(+) + n H(+)(out). The enzyme catalyses a plastoquinone + NADPH + (n+1) H(+)(in) = a plastoquinol + NADP(+) + n H(+)(out). Functionally, NDH shuttles electrons from NAD(P)H:plastoquinone, via FMN and iron-sulfur (Fe-S) centers, to quinones in the photosynthetic chain and possibly in a chloroplast respiratory chain. The immediate electron acceptor for the enzyme in this species is believed to be plastoquinone. Couples the redox reaction to proton translocation, and thus conserves the redox energy in a proton gradient. The sequence is that of NAD(P)H-quinone oxidoreductase subunit J, chloroplastic from Dioscorea elephantipes (Elephant's foot yam).